The primary structure comprises 90 residues: Small ribosomal subunit protein uS15c (90 aa).

This sequence belongs to the universal ribosomal protein uS15 family. As to quaternary structure, part of the 30S ribosomal subunit.

The protein localises to the plastid. Its subcellular location is the chloroplast. The sequence is that of Small ribosomal subunit protein uS15c (rps15) from Panax ginseng (Korean ginseng).